A 119-amino-acid polypeptide reads, in one-letter code: Secreted RxLR effector protein RXLR-C04 (119 aa).

The N-terminal stretch at 1–22 (MRLSYIFVVVATIITNCDIASA) is a signal peptide. A RxLR-dEER motif is present at residues 40–77 (RILRQTNDSDDLEPIRHAMLDMELLEKIAKDPKYAEEV). N46 carries an N-linked (GlcNAc...) asparagine glycan.

Belongs to the RxLR effector family.

The protein localises to the secreted. The protein resides in the host cytoplasm. Its subcellular location is the host nucleus. Its function is as follows. Secreted effector that suppresses pattern-triggered immunity (PTI) in plant host. In Plasmopara halstedii (Downy mildew of sunflower), this protein is Secreted RxLR effector protein RXLR-C04.